The primary structure comprises 347 residues: NADH-quinone oxidoreductase subunit H (347 aa).

A run of 9 helical transmembrane segments spans residues 13–33 (IIMIGQSLLLLVCLLVFIAYV), 50–70 (PNVVGPFGLFQSFADLLKFVF), 82–102 (AVFLLAPLVTVLLALSTWAVV), 115–135 (VGILYIFAISSLEVYGIIMGG), 161–181 (IGFVIVTVLLCVGSLNLTDIV), 198–218 (FLDWHWLSLFPMFIIFFISAL), 263–283 (CSLTTILFLGGWLPPVDIWIL), 286–306 (VPGIIWFMLKACFVFFMFAMV), and 321–341 (LGWKVFLPLSLAMVIIVAFVL).

The protein belongs to the complex I subunit 1 family. As to quaternary structure, NDH-1 is composed of 14 different subunits. Subunits NuoA, H, J, K, L, M, N constitute the membrane sector of the complex.

Its subcellular location is the cell inner membrane. It catalyses the reaction a quinone + NADH + 5 H(+)(in) = a quinol + NAD(+) + 4 H(+)(out). NDH-1 shuttles electrons from NADH, via FMN and iron-sulfur (Fe-S) centers, to quinones in the respiratory chain. The immediate electron acceptor for the enzyme in this species is believed to be ubiquinone. Couples the redox reaction to proton translocation (for every two electrons transferred, four hydrogen ions are translocated across the cytoplasmic membrane), and thus conserves the redox energy in a proton gradient. This subunit may bind ubiquinone. The chain is NADH-quinone oxidoreductase subunit H from Rhizobium leguminosarum bv. trifolii (strain WSM2304).